We begin with the raw amino-acid sequence, 212 residues long: Cytidylate kinase (212 aa).

9–17 serves as a coordination point for ATP; that stretch reads GPAAAGKGT.

The protein belongs to the cytidylate kinase family. Type 1 subfamily.

Its subcellular location is the cytoplasm. It catalyses the reaction CMP + ATP = CDP + ADP. The catalysed reaction is dCMP + ATP = dCDP + ADP. The protein is Cytidylate kinase of Sinorhizobium medicae (strain WSM419) (Ensifer medicae).